The primary structure comprises 353 residues: UPF0421 protein YgaE (353 aa).

4 consecutive transmembrane segments (helical) span residues 20 to 40 (LASWIGLPAPIFAGIAAIFAI), 67 to 87 (VFGLIFGPSPIMIGLTAVIVI), 103 to 123 (LVTVIAILESAGDDFLMFALI), and 125 to 145 (TSTVILGVLSSFIVNLVFLPP).

It belongs to the UPF0421 family.

It is found in the cell membrane. The chain is UPF0421 protein YgaE (ygaE) from Bacillus subtilis (strain 168).